Consider the following 35-residue polypeptide: 3-hydroxyisobutyrate dehydrogenase (35 aa).

Residue 4-33 (TPVGFIGLGNMGNPMAKNLMKHGYPLIIYD) coordinates NAD(+). K24 bears the N6-acetyllysine; alternate mark. Position 24 is an N6-succinyllysine; alternate (K24).

The protein belongs to the HIBADH-related family. 3-hydroxyisobutyrate dehydrogenase subfamily. Homodimer.

The protein localises to the mitochondrion. It carries out the reaction 3-hydroxy-2-methylpropanoate + NAD(+) = 2-methyl-3-oxopropanoate + NADH + H(+). It functions in the pathway amino-acid degradation; L-valine degradation. This is 3-hydroxyisobutyrate dehydrogenase (HIBADH) from Oryctolagus cuniculus (Rabbit).